The sequence spans 57 residues: uncharacterized protein (57 aa).

It is found in the plastid. This is an uncharacterized protein from Euglena longa (Euglenophycean alga).